We begin with the raw amino-acid sequence, 395 residues long: uncharacterized protein (395 aa).

Disordered stretches follow at residues Glu17–Thr155 and Glu276–Lys304. Polar residues-rich tracts occupy residues Asp42–Val71 and Gly81–Lys96. A compositionally biased stretch (basic and acidic residues) spans Val103–Glu133. A compositionally biased stretch (low complexity) spans Thr134–Ser143. Basic and acidic residues-rich tracts occupy residues Gln144 to Thr155 and Glu276 to Ser290. Positions Leu224–Met351 form a coiled coil. Polar residues predominate over residues Ser291–Thr300.

It localises to the cytoplasm. This is an uncharacterized protein from Schizosaccharomyces pombe (strain 972 / ATCC 24843) (Fission yeast).